We begin with the raw amino-acid sequence, 781 residues long: Probable beta-D-xylosidase 5 (781 aa).

The N-terminal stretch at 1-23 is a signal peptide; sequence MSIRRFVRLSLLIIALVSSLCES. Asparagine 43, asparagine 103, and asparagine 123 each carry an N-linked (GlcNAc...) asparagine glycan. Residue aspartate 291 is part of the active site. 6 N-linked (GlcNAc...) asparagine glycosylation sites follow: asparagine 342, asparagine 424, asparagine 504, asparagine 543, asparagine 601, and asparagine 653.

Belongs to the glycosyl hydrolase 3 family.

The protein localises to the secreted. It localises to the extracellular space. Its subcellular location is the extracellular matrix. This Arabidopsis thaliana (Mouse-ear cress) protein is Probable beta-D-xylosidase 5 (BXL5).